The sequence spans 339 residues: Uroporphyrinogen decarboxylase (339 aa).

Substrate is bound by residues 23–27, Asp-72, Tyr-147, Thr-202, and His-315; that span reads RQAGR.

Belongs to the uroporphyrinogen decarboxylase family. In terms of assembly, homodimer.

It localises to the cytoplasm. It catalyses the reaction uroporphyrinogen III + 4 H(+) = coproporphyrinogen III + 4 CO2. It participates in porphyrin-containing compound metabolism; protoporphyrin-IX biosynthesis; coproporphyrinogen-III from 5-aminolevulinate: step 4/4. Catalyzes the decarboxylation of four acetate groups of uroporphyrinogen-III to yield coproporphyrinogen-III. The polypeptide is Uroporphyrinogen decarboxylase (Geotalea daltonii (strain DSM 22248 / JCM 15807 / FRC-32) (Geobacter daltonii)).